Consider the following 295-residue polypeptide: Putative xyloglucan endotransglucosylase/hydrolase protein 1 (295 aa).

The first 24 residues, 1-24 (MNKMEYLSIFGFVSVLYLIIRVDA), serve as a signal peptide directing secretion. The region spanning 27–225 (YEVNGIDQSK…WSLAPFKANF (199 aa)) is the GH16 domain. Residue Glu113 is the Nucleophile of the active site. The Proton donor role is filled by Glu117. Xyloglucan-binding positions include Glu117, 129–131 (QTN), and 139–141 (NRE). Asn180 carries an N-linked (GlcNAc...) asparagine glycan. Residues 204–205 (NW) and Gly209 contribute to the xyloglucan site. N-linked (GlcNAc...) asparagine glycosylation is found at Asn215 and Asn229. Cystine bridges form between Cys233-Cys242 and Cys278-Cys291. Residue Arg283 participates in xyloglucan binding.

The protein belongs to the glycosyl hydrolase 16 family. XTH group 1 subfamily. Contains at least one intrachain disulfide bond essential for its enzymatic activity.

It localises to the secreted. It is found in the cell wall. The protein resides in the extracellular space. Its subcellular location is the apoplast. It catalyses the reaction breaks a beta-(1-&gt;4) bond in the backbone of a xyloglucan and transfers the xyloglucanyl segment on to O-4 of the non-reducing terminal glucose residue of an acceptor, which can be a xyloglucan or an oligosaccharide of xyloglucan.. In terms of biological role, may catalyze xyloglucan endohydrolysis (XEH) and/or endotransglycosylation (XET). Cleaves and religates xyloglucan polymers, an essential constituent of the primary cell wall, and thereby participates in cell wall construction of growing tissues. This is Putative xyloglucan endotransglucosylase/hydrolase protein 1 (XTH1) from Arabidopsis thaliana (Mouse-ear cress).